We begin with the raw amino-acid sequence, 41 residues long: Large ribosomal subunit protein bL36 (41 aa).

The protein belongs to the bacterial ribosomal protein bL36 family.

In Rickettsia prowazekii (strain Madrid E), this protein is Large ribosomal subunit protein bL36.